A 271-amino-acid chain; its full sequence is Tryptophan synthase alpha chain (271 aa).

Residues Glu-56 and Asp-67 each act as proton acceptor in the active site.

It belongs to the TrpA family. In terms of assembly, tetramer of two alpha and two beta chains.

It catalyses the reaction (1S,2R)-1-C-(indol-3-yl)glycerol 3-phosphate + L-serine = D-glyceraldehyde 3-phosphate + L-tryptophan + H2O. The protein operates within amino-acid biosynthesis; L-tryptophan biosynthesis; L-tryptophan from chorismate: step 5/5. Its function is as follows. The alpha subunit is responsible for the aldol cleavage of indoleglycerol phosphate to indole and glyceraldehyde 3-phosphate. This chain is Tryptophan synthase alpha chain, found in Mycobacterium avium (strain 104).